The primary structure comprises 366 residues: Protein lifeguard 1 (366 aa).

Residues 1-141 are disordered; sequence MSHEKSFLVS…GPPSYYDNQD (141 aa). Composition is skewed to pro residues over residues 14 to 44 and 67 to 109; these read YPPP…PFQP and GPYP…PNPY. The next 7 helical transmembrane spans lie at 160–180, 192–212, 223–243, 248–268, 278–298, 302–322, and 341–361; these read VFLV…VFTF, VWTY…LSCC, LVAL…IASF, AVIM…IFSM, VGVL…CIFI, VLEI…LAVD, and FAAL…LTII.

It belongs to the BI1 family. LFG subfamily.

It localises to the membrane. Potential apoptotic regulator. The sequence is that of Protein lifeguard 1 (GRINA) from Bos taurus (Bovine).